The chain runs to 226 residues: Orotate phosphoribosyltransferase (226 aa).

Residues Lys26, 73-74, Arg100, Lys101, Lys104, His106, and 128-136 contribute to the 5-phospho-alpha-D-ribose 1-diphosphate site; these read YK and EDVTTSGKS. Thr132 and Arg161 together coordinate orotate.

It belongs to the purine/pyrimidine phosphoribosyltransferase family. PyrE subfamily. As to quaternary structure, homodimer. It depends on Mg(2+) as a cofactor.

It carries out the reaction orotidine 5'-phosphate + diphosphate = orotate + 5-phospho-alpha-D-ribose 1-diphosphate. Its pathway is pyrimidine metabolism; UMP biosynthesis via de novo pathway; UMP from orotate: step 1/2. Functionally, catalyzes the transfer of a ribosyl phosphate group from 5-phosphoribose 1-diphosphate to orotate, leading to the formation of orotidine monophosphate (OMP). This Agathobacter rectalis (strain ATCC 33656 / DSM 3377 / JCM 17463 / KCTC 5835 / VPI 0990) (Eubacterium rectale) protein is Orotate phosphoribosyltransferase.